The sequence spans 87 residues: Histone H1.C6/H1.C9 (87 aa).

The disordered stretch occupies residues 1–87 (MSDAAVPPKK…KKAVKKAPKK (87 aa)). Positions 11–87 (ASPKKASPKK…KKAVKKAPKK (77 aa)) are enriched in basic residues.

The protein localises to the nucleus. The protein resides in the chromosome. This Trypanosoma cruzi protein is Histone H1.C6/H1.C9.